We begin with the raw amino-acid sequence, 214 residues long: MDLSAVRFDEKGLVPVVVQDARTGEVLTLAYANREALEETLRTRRSTFFSRSRQALWRKGETSGHTQEVVEVLLDCDGDAVVYRVLPQGPACHTGERTCFHRALLEGEKDLGFVVGQVYATIKERLRTLPEGSYVARMHHAGLDRILKKIGEEAGEVILAAKNQNPEELRHEAADLLFHLLLTLAELGLTPEDLAKTLWERHRPRSPYDGSHGN.

The interval 1–114 (MDLSAVRFDE…LEGEKDLGFV (114 aa)) is phosphoribosyl-AMP cyclohydrolase. Residues 115 to 214 (VGQVYATIKE…RSPYDGSHGN (100 aa)) are phosphoribosyl-ATP pyrophosphohydrolase.

This sequence in the N-terminal section; belongs to the PRA-CH family. It in the C-terminal section; belongs to the PRA-PH family.

Its subcellular location is the cytoplasm. The catalysed reaction is 1-(5-phospho-beta-D-ribosyl)-ATP + H2O = 1-(5-phospho-beta-D-ribosyl)-5'-AMP + diphosphate + H(+). It carries out the reaction 1-(5-phospho-beta-D-ribosyl)-5'-AMP + H2O = 1-(5-phospho-beta-D-ribosyl)-5-[(5-phospho-beta-D-ribosylamino)methylideneamino]imidazole-4-carboxamide. It participates in amino-acid biosynthesis; L-histidine biosynthesis; L-histidine from 5-phospho-alpha-D-ribose 1-diphosphate: step 2/9. Its pathway is amino-acid biosynthesis; L-histidine biosynthesis; L-histidine from 5-phospho-alpha-D-ribose 1-diphosphate: step 3/9. The protein is Histidine biosynthesis bifunctional protein HisIE of Thermus thermophilus (strain ATCC BAA-163 / DSM 7039 / HB27).